The primary structure comprises 325 residues: Envelope protein H3 (325 aa).

Over 1-285 (MATVNKTPVI…FTTPLISFFG (285 aa)) the chain is Virion surface. A helical; Signal-anchor membrane pass occupies residues 286 to 306 (LFDINVIGLIVILFIMFMLIF). The Intravirion segment spans residues 307-325 (NVKSKLLWFLTGTFVTAFI).

The protein belongs to the orthopoxvirus OPG108 family. Does not contain disulfide bonds.

The protein resides in the virion membrane. Functionally, envelope protein that binds to heparan sulfate on the cell surface and might provide virion attachment to target cell. This Variola virus (isolate Human/India/Ind3/1967) (VARV) protein is Envelope protein H3 (OPG108).